The chain runs to 289 residues: Protease HtpX homolog (289 aa).

Transmembrane regions (helical) follow at residues 3 to 23 (IVGT…WFFF) and 28 to 48 (TILA…YKVG). His-129 contributes to the Zn(2+) binding site. The active site involves Glu-130. A Zn(2+)-binding site is contributed by His-133. A run of 2 helical transmembrane segments spans residues 144-164 (LGQG…LFSG) and 172-192 (FLAI…VLAI). Residue Glu-197 coordinates Zn(2+). A disordered region spans residues 222 to 250 (SQGNEQAAQQQRQRTSRGRGRRQRGQRND). Basic residues predominate over residues 235 to 246 (RTSRGRGRRQRG).

This sequence belongs to the peptidase M48B family. The cofactor is Zn(2+).

It localises to the cell membrane. In Halobacterium salinarum (strain ATCC 700922 / JCM 11081 / NRC-1) (Halobacterium halobium), this protein is Protease HtpX homolog.